A 34-amino-acid polypeptide reads, in one-letter code: Calcitonin-like peptide 2 (34 aa).

An intrachain disulfide couples cysteine 2 to cysteine 7. Phenylalanine 34 is subject to Phenylalanine amide.

In Odorrana schmackeri (Schmacker's frog), this protein is Calcitonin-like peptide 2.